The primary structure comprises 330 residues: Ribose operon repressor (330 aa).

In terms of domain architecture, HTH lacI-type spans 2-56 (ATMKDVARLAGVSTSTVSHVINKDRFVSEAITAKVEAAIKELNYAPSALARSLKL). The H-T-H motif DNA-binding region spans 4-23 (MKDVARLAGVSTSTVSHVIN).

In terms of biological role, transcriptional repressor for the ribose rbsDACBK operon. RbsR binds to a region of perfect dyad symmetry spanning the rbs operon transcriptional start site. The affinity for the rbs operator is reduced by addition of ribose, consistent with ribose being the inducer of the operon. The chain is Ribose operon repressor (rbsR) from Escherichia coli O6:H1 (strain CFT073 / ATCC 700928 / UPEC).